Reading from the N-terminus, the 207-residue chain is Small ribosomal subunit protein uS4 (207 aa).

The span at 29–38 shows a compositional bias: basic and acidic residues; that stretch reads SDKAKFDSKP. The disordered stretch occupies residues 29 to 54; that stretch reads SDKAKFDSKPGQHGRTSGTRTSDYGL. Over residues 42 to 52 the composition is skewed to polar residues; it reads GRTSGTRTSDY. The region spanning 97-160 is the S4 RNA-binding domain; the sequence is SRLDNVVYRM…KKQTRIAEAL (64 aa).

This sequence belongs to the universal ribosomal protein uS4 family. As to quaternary structure, part of the 30S ribosomal subunit. Contacts protein S5. The interaction surface between S4 and S5 is involved in control of translational fidelity.

Functionally, one of the primary rRNA binding proteins, it binds directly to 16S rRNA where it nucleates assembly of the body of the 30S subunit. Its function is as follows. With S5 and S12 plays an important role in translational accuracy. This chain is Small ribosomal subunit protein uS4, found in Polaromonas naphthalenivorans (strain CJ2).